The following is a 322-amino-acid chain: Hydrolase C26A3.11 (322 aa).

In terms of domain architecture, CN hydrolase spans 44–290 (FRIGLVQLAN…PSIVYADIDP (247 aa)). Residue Glu-83 is the Proton acceptor of the active site. The Proton donor role is filled by Lys-154. Catalysis depends on Cys-195, which acts as the Nucleophile.

The protein belongs to the carbon-nitrogen hydrolase superfamily. NIT1/NIT2 family.

This Schizosaccharomyces pombe (strain 972 / ATCC 24843) (Fission yeast) protein is Hydrolase C26A3.11.